A 635-amino-acid chain; its full sequence is Transaminated amino acid decarboxylase (635 aa).

K588 participates in a covalent cross-link: Glycyl lysine isopeptide (Lys-Gly) (interchain with G-Cter in ubiquitin).

It belongs to the TPP enzyme family. It depends on Mg(2+) as a cofactor. Thiamine diphosphate is required as a cofactor.

It is found in the cytoplasm. The catalysed reaction is 4-methyl-2-oxopentanoate + H(+) = 3-methylbutanal + CO2. It carries out the reaction (S)-3-methyl-2-oxopentanoate + H(+) = 2-methylbutanal + CO2. The enzyme catalyses indole-3-pyruvate + H(+) = indole-3-acetaldehyde + CO2. It catalyses the reaction 3-phenylpyruvate + H(+) = 2-phenylacetaldehyde + CO2. The catalysed reaction is 4-methylsulfanyl-2-oxobutanoate + H(+) = 3-methylsulfanylpropanal + CO2. It carries out the reaction 3-(4-hydroxyphenyl)pyruvate + H(+) = (4-hydroxyphenyl)acetaldehyde + CO2. Its pathway is amino-acid degradation; Ehrlich pathway. One of five 2-oxo acid decarboxylases (PDC1, PDC5, PDC6, ARO10, and THI3) involved in amino acid catabolism. The enzyme catalyzes the decarboxylation of amino acids, which, in a first step, have been transaminated to the corresponding 2-oxo acids (alpha-keto-acids). In a third step, the resulting aldehydes are reduced to alcohols, collectively referred to as fusel oils or alcohols. Its preferred substrates are the transaminated amino acids derived from phenylalanine (phenylpyruvate), tryptophan (3-(indol-3-yl)pyruvate), and probably tyrosine (4-hydroxyphenylpyruvate), but also isoleucine ((3S)-3-methyl-2-oxopentanoate, also alpha-keto-beta-methylvalerate) and methionine (4-methylthio-2-oxobutanoate), whereas transaminated leucine (4-methyl-2-oxopentanoate, also alpha-keto-isocaproate) is a low efficiency substrate and transaminated valine and pyruvate are no substrates. In analogy to the pyruvate decarboxylases the enzyme may in a side-reaction catalyze condensation (or carboligation) reactions leading to the formation of 2-hydroxy ketone, collectively called acyloins. This Saccharomyces cerevisiae (strain ATCC 204508 / S288c) (Baker's yeast) protein is Transaminated amino acid decarboxylase (ARO10).